The primary structure comprises 341 residues: Two-component response regulator EHD1 (341 aa).

Positions 12-127 (RVLVIDDDCS…ELSNIWQHIF (116 aa)) constitute a Response regulatory domain. D63 is modified (4-aspartylphosphate). The region spanning 195 to 254 (DLGKSRLTWTTQLHRQFIAAVNHLGEDKAVPKKILGIMKVKHLTREQVASHLQKYRMQLK) is the HTH myb-type domain. The segment at residues 225–250 (PKKILGIMKVKHLTREQVASHLQKYR) is a DNA-binding region (H-T-H motif).

Post-translationally, two-component system major event consists of a His-to-Asp phosphorelay between a sensor histidine kinase (HK) and a response regulator (RR). In plants, the His-to-Asp phosphorelay involves an additional intermediate named Histidine-containing phosphotransfer protein (HPt). This multistep phosphorelay consists of a His-Asp-His-Asp sequential transfer of a phosphate group between first a His and an Asp of the HK protein, followed by the transfer to a conserved His of the HPt protein and finally the transfer to an Asp in the receiver domain of the RR protein.

It is found in the nucleus. In terms of biological role, transcriptional activator that acts as a floral inducer to promote short-day (SD) flowering pathway. Activates Hd3a and other FT-like genes independently from Hd1. May also activate MADS-box transcription factors involved in flowering regulation. In Oryza sativa subsp. indica (Rice), this protein is Two-component response regulator EHD1 (EHD1).